The chain runs to 141 residues: Large ribosomal subunit protein uL11 (141 aa).

The protein belongs to the universal ribosomal protein uL11 family. In terms of assembly, part of the ribosomal stalk of the 50S ribosomal subunit. Interacts with L10 and the large rRNA to form the base of the stalk. L10 forms an elongated spine to which L12 dimers bind in a sequential fashion forming a multimeric L10(L12)X complex. One or more lysine residues are methylated.

Its function is as follows. Forms part of the ribosomal stalk which helps the ribosome interact with GTP-bound translation factors. This chain is Large ribosomal subunit protein uL11, found in Gloeobacter violaceus (strain ATCC 29082 / PCC 7421).